Here is a 92-residue protein sequence, read N- to C-terminus: Small ribosomal subunit protein uS19 (92 aa).

It belongs to the universal ribosomal protein uS19 family.

Its function is as follows. Protein S19 forms a complex with S13 that binds strongly to the 16S ribosomal RNA. The chain is Small ribosomal subunit protein uS19 from Corynebacterium diphtheriae (strain ATCC 700971 / NCTC 13129 / Biotype gravis).